The chain runs to 694 residues: Elongation factor G (694 aa).

The 280-residue stretch at 9–288 folds into the tr-type G domain; the sequence is SKIRNIGIMA…VIVKWLPSPK (280 aa). Residues 18–25, 82–86, and 136–139 each bind GTP; these read AHIDAGKT, DTPGH, and NKMD.

This sequence belongs to the TRAFAC class translation factor GTPase superfamily. Classic translation factor GTPase family. EF-G/EF-2 subfamily.

The protein resides in the cytoplasm. Catalyzes the GTP-dependent ribosomal translocation step during translation elongation. During this step, the ribosome changes from the pre-translocational (PRE) to the post-translocational (POST) state as the newly formed A-site-bound peptidyl-tRNA and P-site-bound deacylated tRNA move to the P and E sites, respectively. Catalyzes the coordinated movement of the two tRNA molecules, the mRNA and conformational changes in the ribosome. This chain is Elongation factor G, found in Chlamydia felis (strain Fe/C-56) (Chlamydophila felis).